The primary structure comprises 176 residues: Ribosome maturation factor RimM (176 aa).

Residues 100–173 (EGEFHLLDLV…WLRLTPPPGL (74 aa)) form the PRC barrel domain.

Belongs to the RimM family. As to quaternary structure, binds ribosomal protein uS19.

The protein localises to the cytoplasm. An accessory protein needed during the final step in the assembly of 30S ribosomal subunit, possibly for assembly of the head region. Essential for efficient processing of 16S rRNA. May be needed both before and after RbfA during the maturation of 16S rRNA. It has affinity for free ribosomal 30S subunits but not for 70S ribosomes. This Prochlorococcus marinus (strain MIT 9313) protein is Ribosome maturation factor RimM.